The primary structure comprises 436 residues: Ribulose bisphosphate carboxylase large chain (436 aa).

Residues Asn104 and Thr154 each coordinate substrate. Lys156 acts as the Proton acceptor in catalysis. Lys158 lines the substrate pocket. Mg(2+)-binding residues include Lys182, Asp184, and Glu185. Lys182 carries the N6-carboxylysine modification. The Proton acceptor role is filled by His275. Substrate contacts are provided by Arg276, His308, and Ser360.

The protein belongs to the RuBisCO large chain family. Type I subfamily. As to quaternary structure, heterohexadecamer of 8 large chains and 8 small chains; disulfide-linked. The disulfide link is formed within the large subunit homodimers. Requires Mg(2+) as cofactor. Post-translationally, the disulfide bond which can form in the large chain dimeric partners within the hexadecamer appears to be associated with oxidative stress and protein turnover.

It is found in the plastid. It localises to the chloroplast. The enzyme catalyses 2 (2R)-3-phosphoglycerate + 2 H(+) = D-ribulose 1,5-bisphosphate + CO2 + H2O. The catalysed reaction is D-ribulose 1,5-bisphosphate + O2 = 2-phosphoglycolate + (2R)-3-phosphoglycerate + 2 H(+). Functionally, ruBisCO catalyzes two reactions: the carboxylation of D-ribulose 1,5-bisphosphate, the primary event in carbon dioxide fixation, as well as the oxidative fragmentation of the pentose substrate in the photorespiration process. Both reactions occur simultaneously and in competition at the same active site. The protein is Ribulose bisphosphate carboxylase large chain of Euglena geniculata.